Consider the following 326-residue polypeptide: Aquaporin-3 (326 aa).

Transmembrane regions (helical) follow at residues L24–A44 and L64–G84. The NPA 1 signature appears at N88–A90. The chain crosses the membrane as a helical span at residues L107–V127. N-linked (GlcNAc...) asparagine glycosylation occurs at N146. 2 consecutive transmembrane segments (helical) span residues I166–P186 and I196–G216. The NPA 2 signature appears at N220–A222. Residues L247 to Y267 traverse the membrane as a helical segment. The N-linked (GlcNAc...) asparagine glycan is linked to N294.

Belongs to the MIP/aquaporin (TC 1.A.8) family.

It is found in the cell membrane. Functionally, aquaglyceroporin that may modulate the water content and osmolytes during anhydrobiosis. The sequence is that of Aquaporin-3 from Milnesium tardigradum (Water bear).